Consider the following 398-residue polypeptide: Cysteine desulfurase (398 aa).

Residues glycine 74 to threonine 75, asparagine 155, glutamine 182, and cysteine 202 to histidine 204 contribute to the pyridoxal 5'-phosphate site. N6-(pyridoxal phosphate)lysine is present on lysine 205. Basic and acidic residues predominate over residues glycine 230 to alanine 244. Residues glycine 230–alanine 253 form a disordered region. Residue cysteine 327 is the Cysteine persulfide intermediate of the active site. Cysteine 327 lines the [2Fe-2S] cluster pocket.

Belongs to the class-V pyridoxal-phosphate-dependent aminotransferase family. NifS/IscS subfamily. As to quaternary structure, homodimer. Requires pyridoxal 5'-phosphate as cofactor.

It carries out the reaction (sulfur carrier)-H + L-cysteine = (sulfur carrier)-SH + L-alanine. In terms of biological role, catalyzes the removal of elemental sulfur atoms from cysteine to produce alanine. Seems to participate in the biosynthesis of the nitrogenase metalloclusters by providing the inorganic sulfur required for the Fe-S core formation. This chain is Cysteine desulfurase, found in Azospirillum brasilense.